The primary structure comprises 150 residues: SsrA-binding protein (150 aa).

It belongs to the SmpB family.

It localises to the cytoplasm. Required for rescue of stalled ribosomes mediated by trans-translation. Binds to transfer-messenger RNA (tmRNA), required for stable association of tmRNA with ribosomes. tmRNA and SmpB together mimic tRNA shape, replacing the anticodon stem-loop with SmpB. tmRNA is encoded by the ssrA gene; the 2 termini fold to resemble tRNA(Ala) and it encodes a 'tag peptide', a short internal open reading frame. During trans-translation Ala-aminoacylated tmRNA acts like a tRNA, entering the A-site of stalled ribosomes, displacing the stalled mRNA. The ribosome then switches to translate the ORF on the tmRNA; the nascent peptide is terminated with the 'tag peptide' encoded by the tmRNA and targeted for degradation. The ribosome is freed to recommence translation, which seems to be the essential function of trans-translation. The sequence is that of SsrA-binding protein from Campylobacter curvus (strain 525.92).